The chain runs to 243 residues: tRNA (guanine-N(1)-)-methyltransferase (243 aa).

Residues G113 and 133 to 138 (IGDFVL) each bind S-adenosyl-L-methionine.

Belongs to the RNA methyltransferase TrmD family. As to quaternary structure, homodimer.

It is found in the cytoplasm. It carries out the reaction guanosine(37) in tRNA + S-adenosyl-L-methionine = N(1)-methylguanosine(37) in tRNA + S-adenosyl-L-homocysteine + H(+). Its function is as follows. Specifically methylates guanosine-37 in various tRNAs. The polypeptide is tRNA (guanine-N(1)-)-methyltransferase (Bacillus velezensis (strain DSM 23117 / BGSC 10A6 / LMG 26770 / FZB42) (Bacillus amyloliquefaciens subsp. plantarum)).